Here is a 741-residue protein sequence, read N- to C-terminus: Lamin-B receptor (741 aa).

Residues Arg-29–Pro-126 form a disordered region. Composition is skewed to low complexity over residues Thr-57–Ala-84 and Pro-109–Pro-126. Ser-111 carries the post-translational modification Phosphoserine. Thr-135 is modified (phosphothreonine). A Phosphoserine modification is found at Ser-144. Polar residues predominate over residues Thr-160–Arg-184. Residues Thr-160–Thr-194 are disordered. Over residues Thr-185–Thr-194 the composition is skewed to low complexity. Phosphoserine is present on residues Ser-223 and Ser-225. Residues Leu-231–Glu-240 are compositionally biased toward polar residues. The disordered stretch occupies residues Leu-231 to Leu-277. Residues Thr-234 and Thr-237 each carry the phosphothreonine modification. Phosphoserine is present on residues Ser-243, Ser-246, Ser-248, Ser-250, and Ser-263. The residue at position 266 (Thr-266) is a Phosphothreonine. The span at Gly-267–Leu-277 shows a compositional bias: acidic residues. Ser-284 carries the post-translational modification Phosphoserine. At Thr-288 the chain carries Phosphothreonine. Residue Ser-291 is modified to Phosphoserine. Thr-293 is modified (phosphothreonine). Ser-298 is modified (phosphoserine). The next 8 helical transmembrane spans lie at Phe-308–Leu-328, Val-363–Gly-383, Leu-402–Val-422, Phe-429–Asp-449, Leu-497–Pro-517, Pro-543–Glu-563, Tyr-577–Phe-599, and Val-604–Leu-624. Residues Ser-640 and Ser-642 each carry the phosphoserine modification. Residues Met-687–Leu-707 form a helical membrane-spanning segment.

The protein belongs to the ERG4/ERG24 family. Interacts directly with LAM.

It is found in the nucleus inner membrane. Its function is as follows. Anchors the lamina and the heterochromatin to the inner nuclear membrane. This chain is Lamin-B receptor, found in Drosophila melanogaster (Fruit fly).